A 419-amino-acid chain; its full sequence is uncharacterized protein (419 aa).

Positions 38, 44, 47, and 126 each coordinate [4Fe-4S] cluster. Residues Gln250, Tyr280, Glu301, and Asp346 each contribute to the S-adenosyl-L-methionine site. The active-site Nucleophile is the Cys373.

This sequence belongs to the class I-like SAM-binding methyltransferase superfamily. RNA M5U methyltransferase family.

This is an uncharacterized protein from Prochlorococcus marinus (strain SARG / CCMP1375 / SS120).